A 288-amino-acid chain; its full sequence is Urease accessory protein UreD (288 aa).

Belongs to the UreD family. UreD, UreF and UreG form a complex that acts as a GTP-hydrolysis-dependent molecular chaperone, activating the urease apoprotein by helping to assemble the nickel containing metallocenter of UreC. The UreE protein probably delivers the nickel.

Its subcellular location is the cytoplasm. In terms of biological role, required for maturation of urease via the functional incorporation of the urease nickel metallocenter. This chain is Urease accessory protein UreD, found in Dechloromonas aromatica (strain RCB).